The chain runs to 180 residues: Hypoxanthine-guanine phosphoribosyltransferase (180 aa).

Residues lysine 43 and glycine 44 each coordinate diphosphate. Residues glutamate 99 and aspartate 100 each contribute to the Mg(2+) site. Residue aspartate 103 is the Proton acceptor of the active site. Residues lysine 131, 152-153, and aspartate 159 each bind GMP; that span reads FI. Position 165 (arginine 165) interacts with diphosphate.

This sequence belongs to the purine/pyrimidine phosphoribosyltransferase family. Requires Mg(2+) as cofactor.

It localises to the cytoplasm. It carries out the reaction IMP + diphosphate = hypoxanthine + 5-phospho-alpha-D-ribose 1-diphosphate. The enzyme catalyses GMP + diphosphate = guanine + 5-phospho-alpha-D-ribose 1-diphosphate. It functions in the pathway purine metabolism; IMP biosynthesis via salvage pathway; IMP from hypoxanthine: step 1/1. Its pathway is purine metabolism; GMP biosynthesis via salvage pathway; GMP from guanine: step 1/1. Functionally, purine salvage pathway enzyme that catalyzes the transfer of the ribosyl-5-phosphate group from 5-phospho-alpha-D-ribose 1-diphosphate (PRPP) to the N9 position of the 6-oxopurines hypoxanthine and guanine to form the corresponding ribonucleotides IMP (inosine 5'-monophosphate) and GMP (guanosine 5'-monophosphate), with the release of PPi. This Streptococcus pyogenes serotype M3 (strain ATCC BAA-595 / MGAS315) protein is Hypoxanthine-guanine phosphoribosyltransferase (hpt).